The following is a 609-amino-acid chain: Dihydroxy-acid dehydratase (609 aa).

Aspartate 81 is a Mg(2+) binding site. Cysteine 122 provides a ligand contact to [2Fe-2S] cluster. Mg(2+)-binding residues include aspartate 123 and lysine 124. Lysine 124 bears the N6-carboxylysine mark. Cysteine 195 serves as a coordination point for [2Fe-2S] cluster. Residue glutamate 491 participates in Mg(2+) binding. Serine 517 (proton acceptor) is an active-site residue.

Belongs to the IlvD/Edd family. Homodimer. [2Fe-2S] cluster is required as a cofactor. The cofactor is Mg(2+).

The catalysed reaction is (2R)-2,3-dihydroxy-3-methylbutanoate = 3-methyl-2-oxobutanoate + H2O. It carries out the reaction (2R,3R)-2,3-dihydroxy-3-methylpentanoate = (S)-3-methyl-2-oxopentanoate + H2O. It participates in amino-acid biosynthesis; L-isoleucine biosynthesis; L-isoleucine from 2-oxobutanoate: step 3/4. The protein operates within amino-acid biosynthesis; L-valine biosynthesis; L-valine from pyruvate: step 3/4. Functionally, functions in the biosynthesis of branched-chain amino acids. Catalyzes the dehydration of (2R,3R)-2,3-dihydroxy-3-methylpentanoate (2,3-dihydroxy-3-methylvalerate) into 2-oxo-3-methylpentanoate (2-oxo-3-methylvalerate) and of (2R)-2,3-dihydroxy-3-methylbutanoate (2,3-dihydroxyisovalerate) into 2-oxo-3-methylbutanoate (2-oxoisovalerate), the penultimate precursor to L-isoleucine and L-valine, respectively. The polypeptide is Dihydroxy-acid dehydratase (Acinetobacter baumannii (strain AB307-0294)).